The following is a 401-amino-acid chain: MITGAWRCGRKLDAELEICRVTEPIDKPCAESEKVQRWRMSLASLLFFTALLSDHLWLCAGGKLRSRDRTHRRTWNNASHDAQTGLRDEDCGVLLSNLTENGPDCVEADARRRAPLESACSTLYRQKSGSVSSSYSVTVPTVSPHAFLEYFRNFSLSFCDALTIADLLESMTSPDGLNCSLTHIIRDLFSGGPEDGDACSACVHAYTRLDQHAQEKYEEFDALTRKYMADDYSVRAQTHLCQVVYKAWLCAEYFPVPQRQCVRWLPCRHYCGEVTATCPFILPDNDRLLYAGSPSFLCAGFQEEYLSSQGPDCCDVRWSGCDSAVGAACALTHLPGSFSFHRRLSSGAMSCTNRLHGSKLKLCVLVLFLLHTFISITTLQHCSTGSLEAIVPLEEVPMREE.

The chain crosses the membrane as a helical span at residues 42 to 62; that stretch reads LASLLFFTALLSDHLWLCAGG. Residues asparagine 77, asparagine 97, asparagine 153, and asparagine 178 are each glycosylated (N-linked (GlcNAc...) asparagine). A helical membrane pass occupies residues 362–382; that stretch reads LCVLVLFLLHTFISITTLQHC.

Belongs to the NALF family.

Its subcellular location is the membrane. Functionally, probable component of the NALCN channel complex, a channel that regulates the resting membrane potential and controls neuronal excitability. The polypeptide is NALCN channel auxiliary factor 2 (nalf2) (Danio rerio (Zebrafish)).